Here is a 626-residue protein sequence, read N- to C-terminus: Mitogen-activated protein kinase kinase kinase 3 (626 aa).

The PB1 domain maps to 44 to 123; the sequence is DVRIKFEHNG…KSLRILLLSQ (80 aa). 3 stretches are compositionally biased toward polar residues: residues 146 to 155, 165 to 174, and 219 to 232; these read QSAGDINTIY, LSVSSQNPGR, and SAEN…QSLD. Disordered regions lie at residues 146–184 and 218–262; these read QSAG…YVPE and SSAE…SDRE. At Ser-147 the chain carries Phosphoserine. Ser-166 is modified (phosphoserine; by SGK1). Phosphoserine is present on residues Ser-250 and Ser-312. Phosphoserine; by SGK1 is present on Ser-337. Residue Ser-340 is modified to Phosphoserine. The Protein kinase domain occupies 362–622; the sequence is WRRGKLLGQG…AEELLTHHFA (261 aa). ATP contacts are provided by residues 368–376 and Lys-391; that span reads LGQGAFGRV. Asp-489 acts as the Proton acceptor in catalysis.

Belongs to the protein kinase superfamily. STE Ser/Thr protein kinase family. MAP kinase kinase kinase subfamily. Binds both upstream activators and downstream substrates in multimolecular complexes. Part of a complex with MAP2K3, RAC1 and CCM2. Interacts with MAP2K5 and SPAG9. Requires Mg(2+) as cofactor. Post-translationally, phosphorylation at Ser-166 and Ser-337 by SGK1 inhibits its activity.

It catalyses the reaction L-seryl-[protein] + ATP = O-phospho-L-seryl-[protein] + ADP + H(+). It carries out the reaction L-threonyl-[protein] + ATP = O-phospho-L-threonyl-[protein] + ADP + H(+). Activated by phosphorylation on Thr-530. Component of a protein kinase signal transduction cascade. Mediates activation of the NF-kappa-B, AP1 and DDIT3 transcriptional regulators. This Homo sapiens (Human) protein is Mitogen-activated protein kinase kinase kinase 3 (MAP3K3).